The following is a 237-amino-acid chain: uncharacterized protein (237 aa).

Positions 3–116 (SALLIDDERF…RLAKTVQRLL (114 aa)) constitute a Response regulatory domain. Residue aspartate 54 is modified to 4-aspartylphosphate. In terms of domain architecture, HTH LytTR-type spans 135–236 (IPCTGLNRIV…LKELKEMLGF (102 aa)).

This is an uncharacterized protein from Vibrio cholerae serotype O1 (strain ATCC 39315 / El Tor Inaba N16961).